The primary structure comprises 118 residues: Large ribosomal subunit protein bL20 (118 aa).

It belongs to the bacterial ribosomal protein bL20 family.

Its function is as follows. Binds directly to 23S ribosomal RNA and is necessary for the in vitro assembly process of the 50S ribosomal subunit. It is not involved in the protein synthesizing functions of that subunit. The protein is Large ribosomal subunit protein bL20 of Pseudomonas entomophila (strain L48).